Consider the following 183-residue polypeptide: Ribulose bisphosphate carboxylase small subunit, chloroplastic 1 (183 aa).

A chloroplast-targeting transit peptide spans Met1–Gln58.

It belongs to the RuBisCO small chain family. Heterohexadecamer of 8 large and 8 small subunits.

Its subcellular location is the plastid. It localises to the chloroplast. Functionally, ruBisCO catalyzes two reactions: the carboxylation of D-ribulose 1,5-bisphosphate, the primary event in carbon dioxide fixation, as well as the oxidative fragmentation of the pentose substrate. Both reactions occur simultaneously and in competition at the same active site. Although the small subunit is not catalytic it is essential for maximal activity. This is Ribulose bisphosphate carboxylase small subunit, chloroplastic 1 from Amaranthus hypochondriacus (Prince-of-Wales feather).